Consider the following 256-residue polypeptide: Major prion protein (256 aa).

The signal sequence occupies residues 1 to 24 (MVKSHIGSWILVLFVAMWSDVGLC). The interaction with GRB2, ERI3 and SYN1 stretch occupies residues 25-233 (KKRPKPGGGW…ESQAYYQRGA (209 aa)). Positions 28–110 (PKPGGGWNTG…QWNKPSKPKT (83 aa)) are disordered. 5 repeat units span residues 54-62 (PQGGGGWGQ), 63-70 (PHGGGWGQ), 71-78 (PHGGGWGQ), 79-86 (PHGGGWGQ), and 87-95 (PHGGGGWGQ). The tract at residues 54–95 (PQGGGGWGQPHGGGWGQPHGGGWGQPHGGGWGQPHGGGGWGQ) is 5 X 8 AA tandem repeats of P-H-G-G-G-W-G-Q. The span at 55-97 (QGGGGWGQPHGGGWGQPHGGGWGQPHGGGWGQPHGGGGWGQGG) shows a compositional bias: gly residues. Residues histidine 64, glycine 65, glycine 66, histidine 72, glycine 73, glycine 74, histidine 80, glycine 81, glycine 82, histidine 88, glycine 90, and glycine 91 each coordinate Cu(2+). Cysteine 182 and cysteine 217 are oxidised to a cystine. 2 N-linked (GlcNAc...) asparagine glycosylation sites follow: asparagine 184 and asparagine 200. Alanine 233 carries GPI-anchor amidated alanine lipidation. Positions 234 to 256 (SVILFSSPPVILLISFLIFLIVG) are cleaved as a propeptide — removed in mature form.

It belongs to the prion family. As to quaternary structure, monomer and homodimer. Has a tendency to aggregate into amyloid fibrils containing a cross-beta spine, formed by a steric zipper of superposed beta-strands. Soluble oligomers may represent an intermediate stage on the path to fibril formation. Copper binding may promote oligomerization. Interacts with GRB2, APP, ERI3/PRNPIP and SYN1. Mislocalized cytosolically exposed PrP interacts with MGRN1; this interaction alters MGRN1 subcellular location and causes lysosomal enlargement. Interacts with KIAA1191.

Its subcellular location is the cell membrane. The protein localises to the golgi apparatus. In terms of biological role, its primary physiological function is unclear. Has cytoprotective activity against internal or environmental stresses. May play a role in neuronal development and synaptic plasticity. May be required for neuronal myelin sheath maintenance. May play a role in iron uptake and iron homeostasis. Soluble oligomers are toxic to cultured neuroblastoma cells and induce apoptosis (in vitro). Association with GPC1 (via its heparan sulfate chains) targets PRNP to lipid rafts. Also provides Cu(2+) or Zn(2+) for the ascorbate-mediated GPC1 deaminase degradation of its heparan sulfate side chains. This is Major prion protein (PRNP) from Odocoileus hemionus (Mule deer).